Reading from the N-terminus, the 61-residue chain is Small ribosomal subunit protein uS14 (61 aa).

Zn(2+)-binding residues include cysteine 24, cysteine 27, cysteine 40, and cysteine 43.

The protein belongs to the universal ribosomal protein uS14 family. Zinc-binding uS14 subfamily. In terms of assembly, part of the 30S ribosomal subunit. Contacts proteins S3 and S10. It depends on Zn(2+) as a cofactor.

Functionally, binds 16S rRNA, required for the assembly of 30S particles and may also be responsible for determining the conformation of the 16S rRNA at the A site. In Bifidobacterium adolescentis (strain ATCC 15703 / DSM 20083 / NCTC 11814 / E194a), this protein is Small ribosomal subunit protein uS14.